We begin with the raw amino-acid sequence, 344 residues long: Dihydroorotase (344 aa).

2 residues coordinate Zn(2+): His-14 and His-16. Residues His-16–Arg-18 and Asn-42 each bind substrate. Residues Lys-100, His-137, and His-175 each coordinate Zn(2+). An N6-carboxylysine modification is found at Lys-100. His-137 provides a ligand contact to substrate. Leu-220 is a substrate binding site. Asp-248 is a Zn(2+) binding site. Asp-248 is an active-site residue. Substrate is bound by residues His-252 and Ala-264.

Belongs to the metallo-dependent hydrolases superfamily. DHOase family. Class II DHOase subfamily. Homodimer. It depends on Zn(2+) as a cofactor.

The catalysed reaction is (S)-dihydroorotate + H2O = N-carbamoyl-L-aspartate + H(+). It functions in the pathway pyrimidine metabolism; UMP biosynthesis via de novo pathway; (S)-dihydroorotate from bicarbonate: step 3/3. In terms of biological role, catalyzes the reversible cyclization of carbamoyl aspartate to dihydroorotate. The polypeptide is Dihydroorotase (Ralstonia pickettii (strain 12J)).